The following is a 305-amino-acid chain: NAD kinase 2 (305 aa).

Residue Asp78 is the Proton acceptor of the active site. Residues 78–79 (DG), 152–153 (NE), Asp182, 193–198 (TAYSLS), and Asn251 each bind NAD(+).

It belongs to the NAD kinase family. A divalent metal cation is required as a cofactor.

It localises to the cytoplasm. It carries out the reaction NAD(+) + ATP = ADP + NADP(+) + H(+). In terms of biological role, involved in the regulation of the intracellular balance of NAD and NADP, and is a key enzyme in the biosynthesis of NADP. Catalyzes specifically the phosphorylation on 2'-hydroxyl of the adenosine moiety of NAD to yield NADP. The polypeptide is NAD kinase 2 (Synechococcus sp. (strain ATCC 27144 / PCC 6301 / SAUG 1402/1) (Anacystis nidulans)).